A 500-amino-acid chain; its full sequence is Putative beta-lactamase-like 1 (500 aa).

The protein belongs to the beta-lactamase family.

This Homo sapiens (Human) protein is Putative beta-lactamase-like 1 (LACTBL1).